The following is a 460-amino-acid chain: Beta-1,3-xylanase TXYA (460 aa).

The signal sequence occupies residues 1-22 (MKKLAKMISVATLGACAFQAHA). Residues 23–337 (LDGKLVPDQG…LSDPKFIRHS (315 aa)) form the GH26 domain. E138 serves as the catalytic Proton donor. The active-site Nucleophile is the E234. The tract at residues 347-371 (GNSDGGNGGDNGGDNGGDNGGETPE) is disordered. The segment covering 348–366 (NSDGGNGGDNGGDNGGDNG) has biased composition (gly residues). Residues 368–460 (ETPENCTDDF…TVTFTNQVCN (93 aa)) form a carbohydrate binding module (CBM) region. Intrachain disulfides connect C373-C459 and C404-C409.

It belongs to the glycosyl hydrolase 26 family.

It catalyses the reaction Random hydrolysis of (1-&gt;3)-beta-D-glycosidic linkages in (1-&gt;3)-beta-D-xylans.. Its activity is regulated as follows. Completely inhibited by Cu(2+), Hg(2+) and N-bromosuccinimide. Strongly inhibited by Ag(+), Zn(2+) and Pb(2+). Moderately inhibited by Fe(3+), Al(3+), Mn(2+), dithiothreitol and p-chloromercuribenzoic acid. Slightly activated by Mg(2+) and Ca(2+). Unaffected by Na(+), K(+), Ba(2+), EDTA, iodoacetic acid and N-ethylmalaimide. Its function is as follows. Catalyzes the hydrolysis of beta-1,3-xylan into oligosaccharides, mainly xylotriose and xylobiose with smaller amounts of xylotetraose, xylose, xylopentaose and xylohexaose. Weakly active toward beta-1,3-xylotriose, yielding xylose and xylobiose. Converts beta-1,3-xylotetraose into xylotriose, xylobiose and xylose. Converts beta-1,3-xylopentaose into xylotetraose, xylotriose, xylobiose and xylose. Does not hydrolyze xylobiose, p-nitrophenyl-beta-xyloside, beta-1,4-xylan, curdlan or carboxymethylcellulose. This chain is Beta-1,3-xylanase TXYA, found in Vibrio sp.